The sequence spans 146 residues: Hemoglobin subunit beta (146 aa).

In terms of domain architecture, Globin spans 2-146; it reads HWSAEEKQLI…VAHALARKYH (145 aa). Heme b contacts are provided by histidine 63 and histidine 92.

It belongs to the globin family. Heterotetramer of two alpha chains and two beta chains. In terms of tissue distribution, red blood cells.

Functionally, involved in oxygen transport from the lung to the various peripheral tissues. The chain is Hemoglobin subunit beta (HBB) from Columba livia (Rock dove).